Consider the following 62-residue polypeptide: U8-theraphotoxin-Cg1a 2 (62 aa).

An N-terminal signal peptide occupies residues 1-21 (MKTLVLFIIFGLAALFLLSSA). A propeptide spanning residues 22 to 29 (TELEETER) is cleaved from the precursor. 3 cysteine pairs are disulfide-bonded: C31/C46, C38/C51, and C45/C58.

It belongs to the neurotoxin 10 (Hwtx-1) family. 30 (Jztx-14) subfamily. As to expression, expressed by the venom gland.

The protein localises to the secreted. Functionally, probable ion channel inhibitor. The chain is U8-theraphotoxin-Cg1a 2 from Chilobrachys guangxiensis (Chinese earth tiger tarantula).